Reading from the N-terminus, the 341-residue chain is Tetraacyldisaccharide 4'-kinase (341 aa).

Residue 54–61 (TVGGAGKT) coordinates ATP.

It belongs to the LpxK family.

It carries out the reaction a lipid A disaccharide + ATP = a lipid IVA + ADP + H(+). It participates in glycolipid biosynthesis; lipid IV(A) biosynthesis; lipid IV(A) from (3R)-3-hydroxytetradecanoyl-[acyl-carrier-protein] and UDP-N-acetyl-alpha-D-glucosamine: step 6/6. Its function is as follows. Transfers the gamma-phosphate of ATP to the 4'-position of a tetraacyldisaccharide 1-phosphate intermediate (termed DS-1-P) to form tetraacyldisaccharide 1,4'-bis-phosphate (lipid IVA). The chain is Tetraacyldisaccharide 4'-kinase from Brucella melitensis biotype 1 (strain ATCC 23456 / CCUG 17765 / NCTC 10094 / 16M).